The following is a 232-amino-acid chain: Zinc-finger homeodomain protein 5 (232 aa).

The span at 1–11 shows a compositional bias: acidic residues; it reads MELSEHEEDAG. A disordered region spans residues 1–25; that stretch reads MELSEHEEDAGDVGGGCSSPPTPPH. The ZF-HD dimerization-type; degenerate zinc-finger motif lies at 40-86; sequence YHECLRNHAAASGGHVVDGCGEFMPASTEEPLACAACGCHRSFHRRD. Positions 126 to 170 are disordered; it reads GLPFPGYGTPSGGTGTTTASSSDERLRPSPVQPRRRSRTTFTREQ. Residues 159–222 constitute a DNA-binding region (homeobox); the sequence is RRRSRTTFTR…NNKHSFKQKQ (64 aa).

In terms of assembly, homo- and heterodimer with other ZFHD proteins.

It is found in the nucleus. Its function is as follows. Putative transcription factor. This is Zinc-finger homeodomain protein 5 (ZHD5) from Oryza sativa subsp. japonica (Rice).